The sequence spans 504 residues: Maturase K (504 aa).

It belongs to the intron maturase 2 family. MatK subfamily.

Its subcellular location is the plastid. The protein resides in the chloroplast. Its function is as follows. Usually encoded in the trnK tRNA gene intron. Probably assists in splicing its own and other chloroplast group II introns. The polypeptide is Maturase K (Simmondsia chinensis (Jojoba)).